The following is a 493-amino-acid chain: Probable malate:quinone oxidoreductase (493 aa).

It belongs to the MQO family. FAD is required as a cofactor.

The enzyme catalyses (S)-malate + a quinone = a quinol + oxaloacetate. Its pathway is carbohydrate metabolism; tricarboxylic acid cycle; oxaloacetate from (S)-malate (quinone route): step 1/1. The protein is Probable malate:quinone oxidoreductase of Lysinibacillus sphaericus (strain C3-41).